A 345-amino-acid chain; its full sequence is Phenylalanine--tRNA ligase alpha subunit (345 aa).

Mg(2+) is bound at residue glutamate 253.

Belongs to the class-II aminoacyl-tRNA synthetase family. Phe-tRNA synthetase alpha subunit type 1 subfamily. As to quaternary structure, tetramer of two alpha and two beta subunits. It depends on Mg(2+) as a cofactor.

The protein localises to the cytoplasm. It catalyses the reaction tRNA(Phe) + L-phenylalanine + ATP = L-phenylalanyl-tRNA(Phe) + AMP + diphosphate + H(+). In Nitratidesulfovibrio vulgaris (strain DSM 19637 / Miyazaki F) (Desulfovibrio vulgaris), this protein is Phenylalanine--tRNA ligase alpha subunit.